The primary structure comprises 279 residues: Movement protein (279 aa).

A disordered region spans residues 246-279 (SESEELNVESPPAAIGSSSASRSEAFRPQVVNGL). Positions 254–268 (ESPPAAIGSSSASRS) are enriched in low complexity.

It belongs to the cucumovirus movement protein family.

The protein resides in the host cell junction. The protein localises to the host plasmodesma. In terms of biological role, transports viral genome to neighboring plant cells directly through plasmosdesmata, without any budding. The movement protein allows efficient cell to cell propagation, by bypassing the host cell wall barrier. Acts by forming a tubular structure at the host plasmodesmata, enlarging it enough to allow free passage of virion capsids. In Cucumber mosaic virus (strain CS) (CMV), this protein is Movement protein.